The chain runs to 284 residues: Bifunctional protein FolD (284 aa).

NADP(+)-binding positions include 166-168 (GAS) and Ile-232.

It belongs to the tetrahydrofolate dehydrogenase/cyclohydrolase family. As to quaternary structure, homodimer.

The catalysed reaction is (6R)-5,10-methylene-5,6,7,8-tetrahydrofolate + NADP(+) = (6R)-5,10-methenyltetrahydrofolate + NADPH. It catalyses the reaction (6R)-5,10-methenyltetrahydrofolate + H2O = (6R)-10-formyltetrahydrofolate + H(+). Its pathway is one-carbon metabolism; tetrahydrofolate interconversion. Catalyzes the oxidation of 5,10-methylenetetrahydrofolate to 5,10-methenyltetrahydrofolate and then the hydrolysis of 5,10-methenyltetrahydrofolate to 10-formyltetrahydrofolate. The polypeptide is Bifunctional protein FolD (Shewanella baltica (strain OS195)).